The primary structure comprises 614 residues: Zinc metalloproteinase-disintegrin-like Eoc1 (614 aa).

An N-terminal signal peptide occupies residues 1 to 19 (MQVLLITISLAVLPYLGSS). Residues 20 to 193 (IILESGIVND…KASQLNLTPE (174 aa)) constitute a propeptide that is removed on maturation. Residue Gln-194 is modified to Pyrrolidone carboxylic acid. A Peptidase M12B domain is found at 202 to 398 (KHIKVAIVAD…KMPQCILIKP (197 aa)). N-linked (GlcNAc...) asparagine glycosylation occurs at Asn-268. 3 disulfides stabilise this stretch: Cys-313–Cys-393, Cys-353–Cys-377, and Cys-355–Cys-360. Residue His-338 coordinates Zn(2+). Glu-339 is an active-site residue. The Zn(2+) site is built by His-342 and His-348. Asn-376 is a glycosylation site (N-linked (GlcNAc...) asparagine). The 87-residue stretch at 406 to 492 (PPVCGNSLVE…ECPADQFQRN (87 aa)) folds into the Disintegrin domain. Ca(2+) contacts are provided by Val-408, Asn-411, Leu-413, Glu-415, Glu-418, and Asp-421. Disulfide bonds link Cys-409-Cys-438, Cys-420-Cys-433, Cys-422-Cys-428, Cys-432-Cys-455, Cys-446-Cys-452, Cys-451-Cys-477, Cys-464-Cys-484, Cys-471-Cys-503, Cys-496-Cys-508, Cys-515-Cys-565, Cys-530-Cys-576, Cys-543-Cys-553, Cys-560-Cys-602, and Cys-596-Cys-607. Positions 470 to 472 (ECD) match the D/ECD-tripeptide motif. The N-linked (GlcNAc...) asparagine glycan is linked to Asn-498.

The protein belongs to the venom metalloproteinase (M12B) family. P-III subfamily. P-IIIc sub-subfamily. In terms of assembly, heterodimer; disulfide-linked. The cofactor is Zn(2+). In terms of tissue distribution, expressed by the venom gland.

The protein resides in the secreted. In terms of biological role, this metalloproteinase hydrolyzes azocasein, and oxidized insulin B-chain. Also hydrolyzes the alpha-chain (FGA) and more slowly the beta-chain of fibrinogen (FGB), without affecting the gamma-chain. Does not cleave fibrin. Inhibits endothelial cell adhesion to extracellular matrix proteins such as fibrinogen, fibronectin, vitronectin, collagen I, and collagen IV. Induces apoptosis in vascular endothelial cells. This is Zinc metalloproteinase-disintegrin-like Eoc1 (Svmp3-Eoc1) from Echis ocellatus (Ocellated saw-scaled viper).